A 548-amino-acid chain; its full sequence is Sterol esterase TGL1 (548 aa).

At Met-1 the chain carries N-acetylmethionine; partial. The Lumenal portion of the chain corresponds to 1–13 (MYFPFLGRLSITD). A helical transmembrane segment spans residues 14–34 (YIIVVLVYIESIISSVLKLIP). Topologically, residues 35–548 (QPMINLFEWL…TTALDALNKE (514 aa)) are cytoplasmic. An AB hydrolase-1 domain is found at 107–402 (VVYLHHGLLM…NYEHLDLIWG (296 aa)). A GXSXG motif is present at residues 199-203 (GFSQG). Ser-201 serves as the catalytic Nucleophile. Residue Lys-246 forms a Glycyl lysine isopeptide (Lys-Gly) (interchain with G-Cter in ubiquitin) linkage. Catalysis depends on charge relay system residues Asp-369 and His-396. Disordered regions lie at residues 449 to 477 (TTHP…EADE) and 496 to 516 (IDED…HKEQ). Phosphoserine is present on residues Ser-462 and Ser-466. The span at 502–516 (NEHQDDTEDQIHKEQ) shows a compositional bias: basic and acidic residues. 2 positions are modified to phosphoserine: Ser-521 and Ser-538. The segment at 528–548 (KDLRQLDANSSTTALDALNKE) is disordered. Phosphothreonine is present on Thr-539.

Belongs to the AB hydrolase superfamily. Not N-glycosylated.

It is found in the lipid droplet. The protein localises to the membrane. The enzyme catalyses a sterol ester + H2O = a sterol + a fatty acid + H(+). Its function is as follows. Mediates the hydrolysis of steryl esters (SE). Preferentially hydrolyzes ergosteryl and zymosteryl esters. Required for mobilization of SEs from lipid particles/droplets, thereby playing a central role in lipid metabolism and sterol homeostasis. Sterol intermediates stored in SE and set free by SE hydrolases are recycled to the sterol biosynthetic pathway and converted to the final product, ergosterol, in the endoplasmic reticulum. Also has weak lipase activity toward triglycerides at neutral pH, however, the physiological relevance of this activity is unclear. This is Sterol esterase TGL1 (TGL1) from Saccharomyces cerevisiae (strain ATCC 204508 / S288c) (Baker's yeast).